The following is a 260-amino-acid chain: Hydroxyacylglutathione hydrolase (260 aa).

Zn(2+)-binding residues include histidine 55, histidine 57, aspartate 59, histidine 60, histidine 116, aspartate 133, and histidine 171.

This sequence belongs to the metallo-beta-lactamase superfamily. Glyoxalase II family. As to quaternary structure, monomer. Requires Zn(2+) as cofactor.

It catalyses the reaction an S-(2-hydroxyacyl)glutathione + H2O = a 2-hydroxy carboxylate + glutathione + H(+). Its pathway is secondary metabolite metabolism; methylglyoxal degradation; (R)-lactate from methylglyoxal: step 2/2. Thiolesterase that catalyzes the hydrolysis of S-D-lactoyl-glutathione to form glutathione and D-lactic acid. The sequence is that of Hydroxyacylglutathione hydrolase from Shewanella loihica (strain ATCC BAA-1088 / PV-4).